A 574-amino-acid polypeptide reads, in one-letter code: Protein OBERON 2 (574 aa).

2 stretches are compositionally biased toward polar residues: residues 1 to 10 and 65 to 76; these read MGTSSGSNHP and SMSQKTEPDSME. Positions 1–76 are disordered; it reads MGTSSGSNHP…SQKTEPDSME (76 aa). The PHD-type zinc finger occupies 226–291; it reads LCMCTICNKF…VFKCRACNRT (66 aa). Positions 416 to 524 form a coiled coil; the sequence is KKARMALETC…LFEKIKLQEN (109 aa).

In terms of assembly, self-interacts. Interacts with OBE1, OBE3 and OBE4. Binds to VPg of pea seed borne mosaic virus (PSbMV), turnip mosaic virus (TuMV) and lettuce mosaic virus (LMV), but not with VPg of tobacco etch virus (TEV), cowpea mosaic virus (CPMV), tomato black ring virus (TBRV) and grapevine fan leaf virus (GFLV). In terms of tissue distribution, expressed in roots, seedlings, stems, leaves, flowers and siliques, especially in the vasculature.

Its subcellular location is the nucleus. In terms of biological role, probable transcription factor that acts together with OBE1 for the maintenance and/or establishment of both the shoot and root meristems, probably by controlling the expression of the meristem genes such as WUS, PLT1 and PLT2 and of genes required for auxin responses. Promotes cell meristematic activity via the WUSCHEL-CLAVATA pathway. Involved in the development of the basal pole and in auxin-mediated root and vascular development in the embryo. Confers sensitivity to turnip mosaic virus (TuMV) probably by promoting viral movement and multiplication via interaction with TuMV VPg. The sequence is that of Protein OBERON 2 from Arabidopsis thaliana (Mouse-ear cress).